The primary structure comprises 181 residues: Cytochrome c-type biogenesis protein CcmE (181 aa).

The Cytoplasmic segment spans residues 1–8 (MNPRRKSR). A helical; Signal-anchor for type II membrane protein membrane pass occupies residues 9–29 (LKVVVLIMFSVAVAAGLTLYA). Residues 30 to 181 (LSQNIDLFYT…TFNTLQGESK (152 aa)) lie on the Periplasmic side of the membrane. Heme-binding residues include His131 and Tyr135.

Belongs to the CcmE/CycJ family.

It localises to the cell inner membrane. Its function is as follows. Heme chaperone required for the biogenesis of c-type cytochromes. Transiently binds heme delivered by CcmC and transfers the heme to apo-cytochromes in a process facilitated by CcmF and CcmH. The polypeptide is Cytochrome c-type biogenesis protein CcmE (Haemophilus ducreyi (strain 35000HP / ATCC 700724)).